The chain runs to 229 residues: Ras-related protein Rab-33B (229 aa).

GTP is bound by residues N43, V44, G45, K46, T47, C48, T62, and T65. T47 contacts Mg(2+). Positions G56–V68 match the Switch 1 motif. The Mg(2+) site is built by T65 and D88. Residues T89 to H108 carry the Switch 2 motif. GTP-binding residues include G91, N148, K149, D151, A179, and K180. Residues C227 and C229 are each lipidated (S-geranylgeranyl cysteine). C229 bears the Cysteine methyl ester mark.

This sequence belongs to the small GTPase superfamily. Rab family. Interacts (GTP- and GDP-bound forms) with ATG16L1; the complex consists of a tetramer where two RAB33B molecules bind independently one molecule of the ATG16L1 homodimer; the interaction promotes ATG12-ATG5-ATG16L1 complex recruitment to phagophores. Interacts with ATG16L2; however interaction is approximately hundred times lower than for ATG16L1. Interacts with RIC1 (via C-terminus domain); the interaction is direct with a preference for RAB33B-GTP. Interacts with RGP1. Mg(2+) serves as cofactor. Post-translationally, prenylated.

It localises to the golgi apparatus membrane. It is found in the golgi apparatus. Its subcellular location is the cis-Golgi network. The protein localises to the preautophagosomal structure membrane. It catalyses the reaction GTP + H2O = GDP + phosphate + H(+). Regulated by guanine nucleotide exchange factors (GEFs) which promote the exchange of bound GDP for free GTP. Regulated by GTPase activating proteins (GAPs) such as SGSM2 which increase the GTP hydrolysis activity. Inhibited by GDP dissociation inhibitors (GDIs). Functionally, the small GTPases Rab are key regulators of intracellular membrane trafficking, from the formation of transport vesicles to their fusion with membranes. Rabs cycle between an inactive GDP-bound form and an active GTP-bound form that is able to recruit to membranes different sets of downstream effectors directly responsible for vesicle formation, movement, tethering and fusion. RAB33B acts, in coordination with RAB6A, to regulate intra-Golgi retrograde trafficking. Participates in autophagosome formation by recruiting the ATG12-ATG5-ATG16L1 complex to phagophores, probably in a nucleotide-independent manner. This is Ras-related protein Rab-33B (RAB33B) from Pongo abelii (Sumatran orangutan).